A 305-amino-acid chain; its full sequence is Putative cuticle collagen 90 (305 aa).

Disordered stretches follow at residues Ala95 to Gly117 and Pro146 to His305. Triple-helical region stretches follow at residues Gly96–Ser125, Gly142–Ala204, Gly208–Asp252, and Gly256–Asp270. A compositionally biased stretch (low complexity) spans Gln150–Val162. Residues Ala278–His288 are compositionally biased toward basic and acidic residues.

It belongs to the cuticular collagen family. Collagen polypeptide chains are complexed within the cuticle by disulfide bonds and other types of covalent cross-links.

Nematode cuticles are composed largely of collagen-like proteins. The cuticle functions both as an exoskeleton and as a barrier to protect the worm from its environment. The protein is Putative cuticle collagen 90 (col-90) of Caenorhabditis elegans.